Reading from the N-terminus, the 340-residue chain is Pseudaminic acid synthase (340 aa).

The region spanning 281 to 337 is the AFP-like domain; sequence SLFVIKDIQKGEALTENNIKALRPNLGLHPKFYKEILGQKASKFLKANTPLSADDIE.

Belongs to the pseudaminic acid synthase family. It depends on a divalent metal cation as a cofactor.

It catalyses the reaction 2,4-diacetamido-2,4,6-trideoxy-beta-L-altrose + phosphoenolpyruvate + H2O = pseudaminate + phosphate. Catalyzes the fifth step in the biosynthesis of pseudaminic acid, a sialic-acid-like sugar that is used to modify flagellin. Catalyzes the condensation of phosphoenolpyruvate with 2,4-diacetamido-2,4,6-trideoxy-beta-l-altropyranose, forming pseudaminic acid. This is Pseudaminic acid synthase (pseI) from Helicobacter pylori (strain ATCC 700392 / 26695) (Campylobacter pylori).